A 352-amino-acid chain; its full sequence is Glycerol-1-phosphate dehydrogenase [NAD(P)+] (352 aa).

NAD(+) contacts are provided by residues 99-103 (GTKID) and 121-124 (TSPS). Aspartate 126 contributes to the substrate binding site. Residue serine 130 participates in NAD(+) binding. Aspartate 173 contributes to the substrate binding site. Aspartate 173 and histidine 253 together coordinate Zn(2+). Histidine 257 contacts substrate. Position 269 (histidine 269) interacts with Zn(2+).

Belongs to the glycerol-1-phosphate dehydrogenase family. Zn(2+) is required as a cofactor.

The protein localises to the cytoplasm. The catalysed reaction is sn-glycerol 1-phosphate + NAD(+) = dihydroxyacetone phosphate + NADH + H(+). It catalyses the reaction sn-glycerol 1-phosphate + NADP(+) = dihydroxyacetone phosphate + NADPH + H(+). It functions in the pathway membrane lipid metabolism; glycerophospholipid metabolism. Its function is as follows. Catalyzes the NAD(P)H-dependent reduction of dihydroxyacetonephosphate (DHAP or glycerone phosphate) to glycerol 1-phosphate (G1P). The G1P thus generated is used as the glycerophosphate backbone of phospholipids in the cellular membranes of Archaea. The sequence is that of Glycerol-1-phosphate dehydrogenase [NAD(P)+] from Thermoplasma volcanium (strain ATCC 51530 / DSM 4299 / JCM 9571 / NBRC 15438 / GSS1).